The following is a 349-amino-acid chain: MEQVQVTALLDHIPKVHWAPLRGIPLKRRLQTSAIVTWLALLPICLIIYLYLFTIPLLWPILIMYTIWLFFDKAPENGGRRISLVRKLPLWKHFANYFPVTLIKEGDLDPKGNYIMSYHPHGIISMAAFANFATEATGFSEQYPGIVPSLLTLASNFRLPLYRDFMMSLGMCSVSRHSCEAILRSGPGRSIVIVTGGASESLSARPGTNDLTLKKRLGFIRLAIRNGASLVPIFSFGENDIYEQYDNKKGSLIWRYQKWFQKITGFTVPLAHARGIFNYNAGFIPFRHPIVTVVGKPIAVPLLAEGETEPSEEQMHQVQAQYIESLQAIYDKYKDIYAKDRIKDMTMIA.

2 helical membrane-spanning segments follow: residues 44 to 64 (ICLI…ILIM) and 114 to 134 (YIMS…NFAT).

It belongs to the diacylglycerol acyltransferase family.

The protein localises to the endoplasmic reticulum membrane. The catalysed reaction is an acyl-CoA + a 1,2-diacyl-sn-glycerol = a triacyl-sn-glycerol + CoA. The protein operates within glycerolipid metabolism; triacylglycerol biosynthesis. In terms of biological role, catalyzes the terminal and only committed step in triacylglycerol synthesis by using diacylglycerol and fatty acyl CoA as substrates. Required for storage lipid synthesis. This Umbelopsis ramanniana (Oleaginous fungus) protein is Diacylglycerol O-acyltransferase 2B (DGAT2B).